A 370-amino-acid chain; its full sequence is D-alanine--D-alanine ligase (370 aa).

The ATP-grasp domain occupies 144–352 (KKIFADAGIP…YSALIERLVD (209 aa)). ATP is bound at residue 177-232 (EEVLTYPVFVKPANLGSSVGISKATNKKELEDAMTEAFLYDRRVVVEQGVVAREIE). Positions 306, 319, and 321 each coordinate Mg(2+).

It belongs to the D-alanine--D-alanine ligase family. The cofactor is Mg(2+). It depends on Mn(2+) as a cofactor.

It is found in the cytoplasm. The catalysed reaction is 2 D-alanine + ATP = D-alanyl-D-alanine + ADP + phosphate + H(+). It functions in the pathway cell wall biogenesis; peptidoglycan biosynthesis. Cell wall formation. This chain is D-alanine--D-alanine ligase, found in Listeria welshimeri serovar 6b (strain ATCC 35897 / DSM 20650 / CCUG 15529 / CIP 8149 / NCTC 11857 / SLCC 5334 / V8).